The primary structure comprises 610 residues: Butyryl-CoA dehydrogenase Swol_1933 (610 aa).

E451 (proton acceptor) is an active-site residue.

It belongs to the acyl-CoA dehydrogenase family. FAD serves as cofactor.

Its subcellular location is the cytoplasm. It catalyses the reaction butanoyl-CoA + oxidized [electron-transfer flavoprotein] + H(+) = (2E)-butenoyl-CoA + reduced [electron-transfer flavoprotein]. The catalysed reaction is a short-chain 2,3-saturated fatty acyl-CoA + oxidized [electron-transfer flavoprotein] + H(+) = a short-chain (2E)-enoyl-CoA + reduced [electron-transfer flavoprotein]. The protein operates within lipid metabolism; butanoate metabolism. Its function is as follows. Involved in syntrophic growth of S.wolfei with butyrate, as part of the butyrate oxidation pathway. Catalyzes the oxidation of butanoyl-CoA to crotonyl-CoA. Probably passes the electrons released by this reaction on to electron-transfer flavoproteins (EtfAB) to finally generate hydrogen and/or formate. The chain is Butyryl-CoA dehydrogenase Swol_1933 from Syntrophomonas wolfei subsp. wolfei (strain DSM 2245B / Goettingen).